Consider the following 279-residue polypeptide: MAETKDQQNEVNIIIISDAAGDTAFSNATAAAAEFPKAQINYRRYPFITNKDKLDEVLEEIEKYPNLVIIYSLVKDEMQMPVIKFAREHNIQCVDIFSPVVEAIKQTTHMTPDQKIGAQHSLNQKYFDRISAMEFAVMYDDGKDPKGFLEADVVLLGVSRTSKTPLSLFLANKNLKVANLPLVPETHIPKEIYEIDPKKIIGLTNDPSVLNEIRRQRMIAYGLNPDTTYSNMDSINKELESAQALYKKLGCYVINVAHRSIEETAALILEHLGIDDYAK.

G157 to T164 is a binding site for ADP.

Belongs to the pyruvate, phosphate/water dikinase regulatory protein family. PDRP subfamily.

The catalysed reaction is N(tele)-phospho-L-histidyl/L-threonyl-[pyruvate, phosphate dikinase] + ADP = N(tele)-phospho-L-histidyl/O-phospho-L-threonyl-[pyruvate, phosphate dikinase] + AMP + H(+). It carries out the reaction N(tele)-phospho-L-histidyl/O-phospho-L-threonyl-[pyruvate, phosphate dikinase] + phosphate + H(+) = N(tele)-phospho-L-histidyl/L-threonyl-[pyruvate, phosphate dikinase] + diphosphate. In terms of biological role, bifunctional serine/threonine kinase and phosphorylase involved in the regulation of the pyruvate, phosphate dikinase (PPDK) by catalyzing its phosphorylation/dephosphorylation. The protein is Putative pyruvate, phosphate dikinase regulatory protein of Lactobacillus helveticus (strain DPC 4571).